A 299-amino-acid polypeptide reads, in one-letter code: Circadian clock oscillator protein KaiA (299 aa).

A psR domain, binds oxidized quinones region spans residues 1–135; sequence MQSPLSLCLF…LHLGPICTLP (135 aa). The KaiA N-terminal domain maps to 1 to 169; sequence MQSPLSLCLF…RLADKLKERL (169 aa). A flexible linker region spans residues 170–178; the sequence is GYLGVYYKR. The KaiA C-terminal domain maps to 179–287; that stretch reads KPSHFYRNFS…GEMYRRSIPR (109 aa).

This sequence belongs to the KaiA family. As to quaternary structure, homodimer. The KaiABC1 complex composition changes during the circadian cycle to control KaiC1 phosphorylation. Complexes KaiC1(6), KaiA(2-4):KaiC1(6), KaiB(6):KaiC1(6) and KaiC1(6):KaiB(6):KaiA(12) are among the most important forms, many form cooperatively. KaiA and CikA bind to the same region of the KaiB(fs) form and therefore compete. Interacts with KaiC1 but not KaiC2 or KaiC3. Interacts with itself, not seen to interact with other Kai proteins.

Key component of the KaiABC oscillator complex, which constitutes the main circadian regulator in cyanobacteria. Complex composition changes during the circadian cycle to control KaiC phosphorylation. KaiA stimulates KaiC autophosphorylation, while KaiB sequesters KaiA, leading to KaiC autodephosphorylation. KaiA binding to the KaiC CII domain during the subjective day yields KaiA(2-4):KaiC(6) complexes which stimulate KaiC autophosphorylation. Phospho-Ser-431 KaiC accumulation triggers binding of KaiB during the subjective night to form the KaiB(6):KaiC(6) complex, leading to changes in the output regulators CikA and SasA. KaiB(6):KaiC(6) formation exposes a site for KaiA binding on KaiB that sequesters KaiA from KaiC's CII domain, making the KaiC(6):KaiB(6):KaiA(12) complex resulting in KaiC autodephosphorylation. Complete dephosphorylation of KaiC leads to dissociation of KaiA(2):KaiB(1), completing 1 cycle of the Kai oscillator. Its function is as follows. Component of the oscillator and circadian clock in this organism, enhances fitness in a rhythmic environment. Stimulates KaiC1 to autophosphorylate, has no effect on the kinase activity of KaiC2 or KaiC3. In terms of biological role, binds oxidized quinones via the N-terminal PsR domain, allowing it to sense redox changes and possibly mediate clock input. The protein is Circadian clock oscillator protein KaiA of Synechocystis sp. (strain ATCC 27184 / PCC 6803 / Kazusa).